The sequence spans 325 residues: Biotin synthase (325 aa).

A Radical SAM core domain is found at 46-270 (NNSNNIDLCS…IAICKLILPN (225 aa)). [4Fe-4S] cluster is bound by residues cysteine 64, cysteine 68, and cysteine 71. [2Fe-2S] cluster-binding residues include serine 107, cysteine 139, cysteine 198, and arginine 274.

This sequence belongs to the radical SAM superfamily. Biotin synthase family. In terms of assembly, homodimer. [4Fe-4S] cluster serves as cofactor. The cofactor is [2Fe-2S] cluster.

The catalysed reaction is (4R,5S)-dethiobiotin + (sulfur carrier)-SH + 2 reduced [2Fe-2S]-[ferredoxin] + 2 S-adenosyl-L-methionine = (sulfur carrier)-H + biotin + 2 5'-deoxyadenosine + 2 L-methionine + 2 oxidized [2Fe-2S]-[ferredoxin]. Its pathway is cofactor biosynthesis; biotin biosynthesis; biotin from 7,8-diaminononanoate: step 2/2. Functionally, catalyzes the conversion of dethiobiotin (DTB) to biotin by the insertion of a sulfur atom into dethiobiotin via a radical-based mechanism. This is Biotin synthase from Methanococcus aeolicus (strain ATCC BAA-1280 / DSM 17508 / OCM 812 / Nankai-3).